The primary structure comprises 124 residues: Small ribosomal subunit protein uS11 (124 aa).

Belongs to the universal ribosomal protein uS11 family. Part of the 30S ribosomal subunit. Interacts with proteins S7 and S18. Binds to IF-3.

Located on the platform of the 30S subunit, it bridges several disparate RNA helices of the 16S rRNA. Forms part of the Shine-Dalgarno cleft in the 70S ribosome. In Anaplasma phagocytophilum (strain HZ), this protein is Small ribosomal subunit protein uS11.